Here is a 65-residue protein sequence, read N- to C-terminus: Large ribosomal subunit protein bL35 (65 aa).

The tract at residues 1 to 26 (MPKIKTVRGAAKRFKKTASGGFKRKQ) is disordered. Residues 10–26 (AAKRFKKTASGGFKRKQ) are compositionally biased toward basic residues.

Belongs to the bacterial ribosomal protein bL35 family.

This chain is Large ribosomal subunit protein bL35, found in Actinobacillus pleuropneumoniae serotype 7 (strain AP76).